The sequence spans 448 residues: Glutamate--tRNA ligase 1 (448 aa).

Residues 9 to 19 (PSPTGKLHIGN) carry the 'HIGH' region motif. The 'KMSKS' region motif lies at 240–244 (KISKR). An ATP-binding site is contributed by Lys243.

It belongs to the class-I aminoacyl-tRNA synthetase family. Glutamate--tRNA ligase type 1 subfamily. As to quaternary structure, monomer.

It localises to the cytoplasm. It carries out the reaction tRNA(Glu) + L-glutamate + ATP = L-glutamyl-tRNA(Glu) + AMP + diphosphate. Its function is as follows. Catalyzes the attachment of glutamate to tRNA(Glu) in a two-step reaction: glutamate is first activated by ATP to form Glu-AMP and then transferred to the acceptor end of tRNA(Glu). The sequence is that of Glutamate--tRNA ligase 1 from Orientia tsutsugamushi (strain Ikeda) (Rickettsia tsutsugamushi).